A 907-amino-acid polypeptide reads, in one-letter code: MNAPLDGLSVSSSSTGSLGSAAGAGGGGGAGLRLLSANVRQLHQALTALLSEAEREQFTHCLNAYHARRNVFDLVRTLRVLLDSPVKRRLLPMLRLVIPRSDQLLFDQYTAEGLYLPATTPYRQPAWGGPDSAGPGEVRLVSLRRAKAHEGLGFSIRGGSEHGVGIYVSLVEPGSLAEKEGLRVGDQILRVNDKSLARVTHAEAVKALKGSKKLVLSVYSAGRIPGGYVTNHIYTWVDPQGRSISPPSGLPQPHGGALRQQEGDRRSTLHLLQGGDEKKVNLVLGDGRSLGLTIRGGAEYGLGIYITGVDPGSEAEGSGLKVGDQILEVNGRSFLNILHDEAVRLLKSSRHLILTVKDVGRLPHARTTVDETKWIASSRIRETMANSAGFLGDLTTEGINKPGFYKGPAGSQVTLSSLGNQTRVLLEEQARHLLNEQEHATMAYYLDEYRGGSVSVEALVMALFKLLNTHAKFSLLSEVRGTISPQDLERFDHLVLRREIESMKARQPPGPGAGDTYSMVSYSDTGSSTGSHGTSTTVSSARNTLDLEETGEAVQGNINALPDVSVDDVRSTSQGLSSFKPLPRPPPLAQGNDLPLGQPRKLGREDLQPPSSMPSCSGTVFSAPQNRSPPAGTAPTPGTSSAQDLPSSPIYASVSPANPSSKRPLDAHLALVNQHPIGPFPRVQSPPHLKSPSAEATVAGGCLLPPSPSGHPDQTGTNQHFVMVEVHRPDSEPDVNEVRALPQTRTASTLSQLSDSGQTLSEDSGVDAGEAEASAPGRGRQSVSTKSRSSKELPRNERPTDGANKPPGLLEPTSTLVRVKKSAATLGIAIEGGANTRQPLPRIVTIQRGGSAHNCGQLKVGHVILEVNGLTLRGKEHREAARIIAEAFKTKDRDYIDFLVTEFNVML.

The region spanning 140 to 223 is the PDZ 1 domain; that stretch reads LVSLRRAKAH…LVLSVYSAGR (84 aa). Residues 243–264 form a disordered region; it reads SISPPSGLPQPHGGALRQQEGD. Residues 279 to 361 form the PDZ 2 domain; that stretch reads KVNLVLGDGR…LILTVKDVGR (83 aa). 4 disordered regions span residues 502-540, 565-663, 684-717, and 742-815; these read SMKA…TVSS, SVDD…SSKR, QSPP…QTGT, and PQTR…PTST. The segment covering 521-540 has biased composition (low complexity); that stretch reads SYSDTGSSTGSHGTSTTVSS. Over residues 609–626 the composition is skewed to polar residues; that stretch reads PPSSMPSCSGTVFSAPQN. A compositionally biased stretch (low complexity) spans 628-642; the sequence is SPPAGTAPTPGTSSA. Serine 685 is subject to Phosphoserine. A compositionally biased stretch (polar residues) spans 743–762; that stretch reads QTRTASTLSQLSDSGQTLSE. Residues 789–800 show a composition bias toward basic and acidic residues; sequence SSKELPRNERPT. One can recognise a PDZ 3 domain in the interval 816–899; it reads LVRVKKSAAT…TKDRDYIDFL (84 aa).

Forms homooligomers. Interacts (via C-terminal PDZ domain) with MYO15A; this interaction is necessary for localization of WHRN to stereocilia tips. Interacts (via C-terminal PDZ domain) with MPP1/p55. Interacts with LRRC4C/NGL1. Interacts with MYO7A. Interacts with RPGR. Interacts with EPS8. Interacts with CASK. Interacts with CIB2. Component of USH2 complex, composed of ADGRV1, PDZD7, USH2A and WHRN. Interacts (via PDZ domains) with PDZD7; the interaction is direct. Interacts (via N-terminal PDZ domain) with USH2A (via cytoplasmic region). Interacts with ADGRV1/MASS1 (via cytoplasmic region).

It localises to the cytoplasm. It is found in the cell projection. The protein resides in the stereocilium. The protein localises to the growth cone. Its subcellular location is the photoreceptor inner segment. It localises to the synapse. Involved in hearing and vision as member of the USH2 complex. Necessary for elongation and maintenance of inner and outer hair cell stereocilia in the organ of Corti in the inner ear. Involved in the maintenance of the hair bundle ankle region, which connects stereocilia in cochlear hair cells of the inner ear. In retina photoreceptors, required for the maintenance of periciliary membrane complex that seems to play a role in regulating intracellular protein transport. This is Whirlin from Homo sapiens (Human).